Reading from the N-terminus, the 698-residue chain is Transferrin-binding protein B (698 aa).

Residues 1 to 20 (MNNPLVNQAAMVLPVFLLSA) form the signal peptide. Residue cysteine 21 is the site of N-palmitoyl cysteine attachment. A lipid anchor (S-diacylglycerol cysteine) is attached at cysteine 21. Disordered stretches follow at residues 33-58 (VDTE…QKDQ), 83-102 (IKLS…KNPS), 294-324 (FSGK…SLSG), 349-383 (GSAK…SENS), 428-479 (ESGK…GDAN), and 669-698 (TKNA…KPVQ). Residues 46 to 56 (DVSSEKPQAQK) show a composition bias toward polar residues. Residues 299-315 (EATDKPKNDGETKEHPF) show a composition bias toward basic and acidic residues. Low complexity predominate over residues 369-383 (AAASNGAAGTSSENS). Polar residues predominate over residues 460-476 (QAGTAENGNPAASNTAG). Over residues 671 to 686 (NATDASGNGNSASSAT) the composition is skewed to low complexity.

It belongs to the TbpB family. Binds only human holo-transferrin (TF), via the TF C-terminus. Forms a large complex with TbpA and TF. Interacts via its C-terminal domain with Slam1.

The protein resides in the cell outer membrane. It localises to the cell surface. Neisseria acquires iron by extracting it from serum transferrin (TF) in its human host. Acts as a TF receptor and is required for TF utilization. Involved in the initial capture of TF. Helps select only those TF molecules that can be used as an iron source and concentrates them on the cell surface, maintaining the iron-loaded status of the TF C-terminal lobe until its delivery to TbpA. The polypeptide is Transferrin-binding protein B (Neisseria meningitidis serogroup A / serotype 4A (strain DSM 15465 / Z2491)).